The primary structure comprises 289 residues: MKTPELITDPAAWQARCTAAREAGTRIALVTTMGYLHEGHLSLMREARRRADAGGRRGLAVGTIFVNPTQFGPTEDLARYPRDLEGDLAKCAAAGLDAVLAPSDPALMFAPGHETWVTVERASQGLDGASRPGHFRGVATVVAKLFNLTRPHVALFGEKDWQQLAVIRAMVRDLAFGIEIVGMPIVREPDGLALSSRNAYLSPDERRRALALSGALAEAREATARGERDAAALRAGARARLEAAGGRVDYVELVHPETLAPVARAEPGTVLLLAASFGTTRLIDNGRLP.

Methionine 33–histidine 40 provides a ligand contact to ATP. Histidine 40 (proton donor) is an active-site residue. A (R)-pantoate-binding site is contributed by glutamine 70. Residue glutamine 70 participates in beta-alanine binding. Glycine 157–aspartate 160 contacts ATP. Position 163 (glutamine 163) interacts with (R)-pantoate. ATP contacts are provided by residues valine 186 and leucine 194–arginine 197.

This sequence belongs to the pantothenate synthetase family. Homodimer.

The protein resides in the cytoplasm. The enzyme catalyses (R)-pantoate + beta-alanine + ATP = (R)-pantothenate + AMP + diphosphate + H(+). It participates in cofactor biosynthesis; (R)-pantothenate biosynthesis; (R)-pantothenate from (R)-pantoate and beta-alanine: step 1/1. Catalyzes the condensation of pantoate with beta-alanine in an ATP-dependent reaction via a pantoyl-adenylate intermediate. This chain is Pantothenate synthetase, found in Anaeromyxobacter dehalogenans (strain 2CP-C).